A 599-amino-acid polypeptide reads, in one-letter code: UvrABC system protein C (599 aa).

Positions 15–93 (EKPGCYQYFD…IKEYQPRYNV (79 aa)) constitute a GIY-YIG domain. Residues 207–242 (HRLVRMYRDRMQVYSEGLRFEEAQICKERIELLERY) enclose the UVR domain.

Belongs to the UvrC family. Interacts with UvrB in an incision complex.

The protein resides in the cytoplasm. Its function is as follows. The UvrABC repair system catalyzes the recognition and processing of DNA lesions. UvrC both incises the 5' and 3' sides of the lesion. The N-terminal half is responsible for the 3' incision and the C-terminal half is responsible for the 5' incision. This is UvrABC system protein C from Porphyromonas gingivalis (strain ATCC BAA-308 / W83).